Consider the following 834-residue polypeptide: Periplasmic nitrate reductase (834 aa).

The segment at residues 1–29 is a signal peptide (tat-type signal); it reads MKLSRREFAKANAAAIAAAAAGLPLASTA. The 4Fe-4S Mo/W bis-MGD-type domain occupies 41–97; that stretch reads LDWNKAPCRFCGTGCSVMVATRDNRVVATHGDVKAEVNRGLNCVKGYFLSKIMYGVD. [4Fe-4S] cluster is bound by residues cysteine 48, cysteine 51, cysteine 55, and cysteine 83. Mo-bis(molybdopterin guanine dinucleotide) contacts are provided by residues lysine 85, glutamine 152, asparagine 177, cysteine 181, 214-221, 245-249, 264-266, methionine 375, glutamine 379, asparagine 485, 511-512, lysine 534, aspartate 561, and 721-730; these read WGSNMAEM, STFEH, QTD, SD, and TGRVLEHWHT. Phenylalanine 797 serves as a coordination point for substrate. Positions 805 and 822 each coordinate Mo-bis(molybdopterin guanine dinucleotide).

The protein belongs to the prokaryotic molybdopterin-containing oxidoreductase family. NasA/NapA/NarB subfamily. As to quaternary structure, component of the periplasmic nitrate reductase NapAB complex composed of NapA and NapB. It depends on [4Fe-4S] cluster as a cofactor. Mo-bis(molybdopterin guanine dinucleotide) serves as cofactor. Post-translationally, predicted to be exported by the Tat system. The position of the signal peptide cleavage has not been experimentally proven.

Its subcellular location is the periplasm. It carries out the reaction 2 Fe(II)-[cytochrome] + nitrate + 2 H(+) = 2 Fe(III)-[cytochrome] + nitrite + H2O. Functionally, catalytic subunit of the periplasmic nitrate reductase complex NapAB. Receives electrons from NapB and catalyzes the reduction of nitrate to nitrite. This Ectopseudomonas mendocina (strain ymp) (Pseudomonas mendocina) protein is Periplasmic nitrate reductase.